A 263-amino-acid polypeptide reads, in one-letter code: Type II restriction enzyme TaqI (263 aa).

In terms of processing, only 15% of purified enzyme (upon expression in E.coli) can be sequenced, suggesting the remainder has a blocked N-terminus.

It catalyses the reaction Endonucleolytic cleavage of DNA to give specific double-stranded fragments with terminal 5'-phosphates.. Its function is as follows. A P subtype restriction enzyme that recognizes the double-stranded sequence 5'-TCGA-3' and cleaves after T-1. The protein is Type II restriction enzyme TaqI (taqIR) of Thermus aquaticus.